Reading from the N-terminus, the 285-residue chain is Diphthine methyl ester synthase (285 aa).

S-adenosyl-L-methionine contacts are provided by residues Leu-9, Asp-84, Gly-87, 112 to 113 (SI), and Leu-163. Ser-171 is subject to Phosphoserine. S-adenosyl-L-methionine-binding residues include Val-225 and His-250.

This sequence belongs to the diphthine synthase family.

The enzyme catalyses 2-[(3S)-amino-3-carboxypropyl]-L-histidyl-[translation elongation factor 2] + 4 S-adenosyl-L-methionine = diphthine methyl ester-[translation elongation factor 2] + 4 S-adenosyl-L-homocysteine + 3 H(+). The protein operates within protein modification; peptidyl-diphthamide biosynthesis. S-adenosyl-L-methionine-dependent methyltransferase that catalyzes four methylations of the modified target histidine residue in translation elongation factor 2 (EF-2), to form an intermediate called diphthine methyl ester. The four successive methylation reactions represent the second step of diphthamide biosynthesis. The sequence is that of Diphthine methyl ester synthase (DPH5) from Homo sapiens (Human).